Reading from the N-terminus, the 381-residue chain is Succinyl-diaminopimelate desuccinylase (381 aa).

His69 provides a ligand contact to Zn(2+). Asp71 is a catalytic residue. Residue Asp103 coordinates Zn(2+). Residue Glu137 is the Proton acceptor of the active site. The Zn(2+) site is built by Glu138, Glu166, and His355.

Belongs to the peptidase M20A family. DapE subfamily. Homodimer. Zn(2+) serves as cofactor. Requires Co(2+) as cofactor.

It carries out the reaction N-succinyl-(2S,6S)-2,6-diaminopimelate + H2O = (2S,6S)-2,6-diaminopimelate + succinate. The protein operates within amino-acid biosynthesis; L-lysine biosynthesis via DAP pathway; LL-2,6-diaminopimelate from (S)-tetrahydrodipicolinate (succinylase route): step 3/3. In terms of biological role, catalyzes the hydrolysis of N-succinyl-L,L-diaminopimelic acid (SDAP), forming succinate and LL-2,6-diaminopimelate (DAP), an intermediate involved in the bacterial biosynthesis of lysine and meso-diaminopimelic acid, an essential component of bacterial cell walls. The sequence is that of Succinyl-diaminopimelate desuccinylase from Rickettsia akari (strain Hartford).